Reading from the N-terminus, the 284-residue chain is MYVVSTKQMLNNAQRGGYAVPAFNIHNLETMQVVVETAASMHAPVIIAGTPGTFTHAGTENLMALVSAMAKQYHHPLVIHLDHHTKFDDIAQKVRSGVRSVMIDASHLPFAQNISRVKEVVDFCHRFDVSVEAELGQLGGQEDDVQVNEADAFYTNPVQAREFAEATGIDSLAVAIGTAHGMYARAPALDFSRLENIRQWVNLPLVLHGASGLSTKDIQQTIKLGICKINVATELKNAFSQALKNYLTEHPEATDPRDYLQSAKSAMRDVVSKVIADCGCEGRA.

Asp-82 (proton donor) is an active-site residue. His-83 and His-180 together coordinate Zn(2+). Gly-181 contributes to the dihydroxyacetone phosphate binding site. Residue His-208 participates in Zn(2+) binding. Residues 209–211 (GAS) and 230–233 (NVAT) contribute to the dihydroxyacetone phosphate site.

It belongs to the class II fructose-bisphosphate aldolase family. TagBP aldolase GatY subfamily. Forms a complex with GatZ. The cofactor is Zn(2+).

The catalysed reaction is D-tagatofuranose 1,6-bisphosphate = D-glyceraldehyde 3-phosphate + dihydroxyacetone phosphate. The protein operates within carbohydrate metabolism; D-tagatose 6-phosphate degradation; D-glyceraldehyde 3-phosphate and glycerone phosphate from D-tagatose 6-phosphate: step 2/2. Functionally, catalytic subunit of the tagatose-1,6-bisphosphate aldolase GatYZ, which catalyzes the reversible aldol condensation of dihydroxyacetone phosphate (DHAP or glycerone-phosphate) with glyceraldehyde 3-phosphate (G3P) to produce tagatose 1,6-bisphosphate (TBP). Requires GatZ subunit for full activity and stability. Is involved in the catabolism of galactitol. The sequence is that of D-tagatose-1,6-bisphosphate aldolase subunit GatY from Escherichia coli O6:H1 (strain CFT073 / ATCC 700928 / UPEC).